Reading from the N-terminus, the 350-residue chain is C5a anaphylatoxin chemotactic receptor 1 (350 aa).

At 1–37 (MDSFNYTTPDYGHYDDKDTLDLNTPVDKTSNTLRVPD) the chain is on the extracellular side. A glycan (N-linked (GlcNAc...) asparagine) is linked at Asn-5. Residues 10-18 (DYGHYDDKD) are required for CHIPS binding. Sulfotyrosine is present on residues Tyr-11 and Tyr-14. An involved in C5a binding region spans residues 21 to 30 (DLNTPVDKTS). Residues 38-64 (ILALVIFAVVFLVGVLGNALVVWVTAF) traverse the membrane as a helical segment. The Cytoplasmic portion of the chain corresponds to 65 to 69 (EAKRT). Residues 70–93 (INAIWFLNLAVADFLSCLALPILF) traverse the membrane as a helical segment. Residues 94–110 (TSIVQHHHWPFGGAACS) are Extracellular-facing. Cys-109 and Cys-188 are joined by a disulfide. A helical membrane pass occupies residues 111–132 (ILPSLILLNMYASILLLATISA). Topologically, residues 133-153 (DRFLLVFKPIWCQNFRGAGLA) are cytoplasmic. A helical membrane pass occupies residues 154–174 (WIACAVAWGLALLLTIPSFLY). Residues 175 to 200 (RVVREEYFPPKVLCGVDYSHDKRRER) lie on the Extracellular side of the membrane. Residues 201–226 (AVAIVRLVLGFLWPLLTLTICYTFIL) form a helical membrane-spanning segment. Over 227 to 242 (LRTWSRRATRSTKTLK) the chain is Cytoplasmic. A helical membrane pass occupies residues 243–265 (VVVAVVASFFIFWLPYQVTGIMM). At 266 to 282 (SFLEPSSPTFLLLKKLD) the chain is on the extracellular side. A helical membrane pass occupies residues 283 to 303 (SLCVSFAYINCCINPIIYVVA). Residues 304 to 350 (GQGFQGRLRKSLPSLLRNVLTEESVVRESKSFTRSTVDTMAQKTQAV) are Cytoplasmic-facing. Phosphoserine occurs at positions 314, 317, 327, 332, 334, and 338.

This sequence belongs to the G-protein coupled receptor 1 family. In terms of assembly, homodimer. May also form higher-order oligomers. Interacts (when phosphorylated) with ARRB1 and ARRB2; the interaction is associated with internalization of C5aR. Interacts (via N-terminal domain) with S.aureus chemotaxis inhibitory protein (CHIPS); the interaction blocks the receptor and may thus inhibit the immune response. In terms of processing, sulfation plays a critical role in the association of C5aR with C5a, but no significant role in the ability of the receptor to transduce a signal and mobilize calcium in response to a small a small peptide agonist. Sulfation at Tyr-14 is important for CHIPS binding. Phosphorylated on serine residues in response to C5a binding, resulting in internalization of the receptor and short-term desensitization to the ligand. The key residues involved in this process are Ser-334 and Ser-338.

Its subcellular location is the cell membrane. It localises to the cytoplasmic vesicle. Receptor for the chemotactic and inflammatory peptide anaphylatoxin C5a. The ligand interacts with at least two sites on the receptor: a high-affinity site on the extracellular N-terminus, and a second site in the transmembrane region which activates downstream signaling events. Receptor activation stimulates chemotaxis, granule enzyme release, intracellular calcium release and superoxide anion production. This Homo sapiens (Human) protein is C5a anaphylatoxin chemotactic receptor 1 (C5AR1).